The sequence spans 390 residues: Guanidine hydrolase (390 aa).

Ni(2+)-binding residues include histidine 174, aspartate 199, histidine 201, aspartate 203, aspartate 291, and aspartate 293.

The protein belongs to the arginase family. As to quaternary structure, homohexamer. Ni(2+) is required as a cofactor.

The protein localises to the cytoplasm. It carries out the reaction guanidine + H2O = urea + NH4(+). Activation of GdmH depends on the presence of the accessory proteins GhaA (Sll1078) and GhaB (Sll1079), which load nickel into the active site. Hydrolase activity is slightly activated in the presence of GTP. It does not require ATP or NAD(P)H. Addition of Ca(2+), Mn(2+), Fe(2+) or Fe(3+) has no consistent effects, whereas addition of Co(2+), Cu(2+) or Zn(2+) inhibits the activity. Catalyzes the hydrolysis of guanidine into urea and ammonium. Is highly specific for free guanidine. At pH 8, also catalyzes the release of urea from methylguanidine but with significantly reduced specific activity compared with that for guanidine. Cannot hydrolyze guanidinoacetate, guanidinopropionate, guanidinobutyrate, agmatine, arginine or creatine. Required to use guanidine as the sole nitrogen source for growth. Overexpression of the gene accelerates guanidine degradation and promotes biomass growth. This chain is Guanidine hydrolase, found in Synechocystis sp. (strain ATCC 27184 / PCC 6803 / Kazusa).